We begin with the raw amino-acid sequence, 445 residues long: Phosphoglucosamine mutase (445 aa).

The active-site Phosphoserine intermediate is the Ser-102. Mg(2+) contacts are provided by Ser-102, Asp-241, Asp-243, and Asp-245. Phosphoserine is present on Ser-102.

Belongs to the phosphohexose mutase family. The cofactor is Mg(2+). Post-translationally, activated by phosphorylation.

It catalyses the reaction alpha-D-glucosamine 1-phosphate = D-glucosamine 6-phosphate. Functionally, catalyzes the conversion of glucosamine-6-phosphate to glucosamine-1-phosphate. In Shigella dysenteriae serotype 1 (strain Sd197), this protein is Phosphoglucosamine mutase.